A 465-amino-acid polypeptide reads, in one-letter code: Putative apoptosis inhibitor ORF106 (465 aa).

Residues 291-357 (RECSFSTWPK…MEKETCGWLE (67 aa)) form a BIR repeat. The segment covering 373–382 (EGGEDKEEDG) has biased composition (acidic residues). The segment at 373–393 (EGGEDKEEDGGGGGVIEFPKN) is disordered. The RING-type zinc finger occupies 405–447 (CKACYERKADIAFIPCGHVFSCNICTMEMFASYKKKKRCPMCR).

This chain is Putative apoptosis inhibitor ORF106, found in Magallana gigas (Pacific oyster).